The following is a 488-amino-acid chain: 3-octaprenyl-4-hydroxybenzoate carboxy-lyase (488 aa).

Asparagine 172 contacts Mn(2+). Prenylated FMN contacts are provided by residues 175–177 (IYR), 189–191 (RWL), and 194–195 (RG). Glutamate 238 is a Mn(2+) binding site. The Proton donor role is filled by aspartate 287.

The protein belongs to the UbiD family. As to quaternary structure, homohexamer. Requires prenylated FMN as cofactor. The cofactor is Mn(2+).

The protein resides in the cell membrane. The catalysed reaction is a 4-hydroxy-3-(all-trans-polyprenyl)benzoate + H(+) = a 2-(all-trans-polyprenyl)phenol + CO2. The protein operates within cofactor biosynthesis; ubiquinone biosynthesis. Catalyzes the decarboxylation of 3-octaprenyl-4-hydroxy benzoate to 2-octaprenylphenol, an intermediate step in ubiquinone biosynthesis. The protein is 3-octaprenyl-4-hydroxybenzoate carboxy-lyase of Legionella pneumophila subsp. pneumophila (strain Philadelphia 1 / ATCC 33152 / DSM 7513).